The primary structure comprises 164 residues: Disulfide bond formation protein B (164 aa).

Over 1–4 (MRII) the chain is Cytoplasmic. The helical transmembrane segment at 5 to 21 (FLLIALICAGLVSYALY) threads the bilayer. Residues 22 to 39 (LQLADGLLPCPLCIFQRM) lie on the Periplasmic side of the membrane. Residues Cys31 and Cys34 are joined by a disulfide bond. A helical membrane pass occupies residues 40–56 (AYWLVGITALFAFIHHP). Residues 57–62 (QRLGRR) are Cytoplasmic-facing. Residues 63–80 (IYCGLIILFSLAGAIVAG) traverse the membrane as a helical segment. At 81–136 (RQAWLVRFPEAFECGISPEEAFLNELPLARWWPDMFEANGDCTDGTWQFLSLTIPD) the chain is on the periplasmic side. A disulfide bond links Cys94 and Cys122. A helical membrane pass occupies residues 137–155 (WSLLIFLAFSLIAGLLWRS). Topologically, residues 156–164 (RSISSSNLK) are cytoplasmic.

It belongs to the DsbB family.

The protein localises to the cell inner membrane. Its function is as follows. Required for disulfide bond formation in some periplasmic proteins. Acts by oxidizing the DsbA protein. The protein is Disulfide bond formation protein B of Nitrosomonas europaea (strain ATCC 19718 / CIP 103999 / KCTC 2705 / NBRC 14298).